We begin with the raw amino-acid sequence, 351 residues long: Type II methyltransferase M.DsaV (351 aa).

Residues 6–312 enclose the SAM-dependent MTase C5-type domain; sequence LKFIDLFAGI…QKMLSYIDLT (307 aa). Residue Cys75 is part of the active site.

The protein belongs to the class I-like SAM-binding methyltransferase superfamily. C5-methyltransferase family.

It carries out the reaction a 2'-deoxycytidine in DNA + S-adenosyl-L-methionine = a 5-methyl-2'-deoxycytidine in DNA + S-adenosyl-L-homocysteine + H(+). A methylase, recognizes the double-stranded sequence 5'-CCNGG-3', methylates C-2 on both strands, and protects the DNA from cleavage by the DsaV endonuclease. The polypeptide is Type II methyltransferase M.DsaV (Dactylococcopsis salina (Myxobaktron salinum)).